The primary structure comprises 379 residues: Probable protein phosphatase 2C 46 (379 aa).

The N-terminal stretch at 1–20 (MLSTLMKLLSACLWPSSSSG) is a signal peptide. Residues 42–353 (LVGEFSMAVV…DDITVVIIFL (312 aa)) form the PPM-type phosphatase domain. S73 carries the post-translational modification Phosphoserine. Residues D84, G85, D285, and D344 each coordinate Mn(2+).

This sequence belongs to the PP2C family. Interacts with SAUR19. Requires Mg(2+) as cofactor. The cofactor is Mn(2+).

It carries out the reaction O-phospho-L-seryl-[protein] + H2O = L-seryl-[protein] + phosphate. It catalyses the reaction O-phospho-L-threonyl-[protein] + H2O = L-threonyl-[protein] + phosphate. Its function is as follows. May dephosphorylate and repress plasma membrane H(+)-ATPases (PM H(+)-ATPases, e.g. AHA1 and AHA2), thus influencing negatively plant growth and fitness. This chain is Probable protein phosphatase 2C 46, found in Arabidopsis thaliana (Mouse-ear cress).